A 436-amino-acid polypeptide reads, in one-letter code: 2-(3-amino-3-carboxypropyl)histidine synthase subunit 1 (436 aa).

Residues Met-1 to Ser-27 are disordered. Over residues Ser-7–Arg-19 the composition is skewed to basic residues. 3 residues coordinate [4Fe-4S] cluster: Cys-130, Cys-239, and Cys-368. The disordered stretch occupies residues Pro-417–Ser-436. A compositionally biased stretch (basic residues) spans Pro-426–Ser-436.

The protein belongs to the DPH1/DPH2 family. DPH1 subfamily. As to quaternary structure, component of the 2-(3-amino-3-carboxypropyl)histidine synthase complex composed of dph1, dph2, dph3 and a NADH-dependent reductase, predominantly cbr1. The cofactor is [4Fe-4S] cluster.

The protein localises to the cytoplasm. The catalysed reaction is L-histidyl-[translation elongation factor 2] + S-adenosyl-L-methionine = 2-[(3S)-amino-3-carboxypropyl]-L-histidyl-[translation elongation factor 2] + S-methyl-5'-thioadenosine + H(+). Its pathway is protein modification; peptidyl-diphthamide biosynthesis. Catalyzes the first step of diphthamide biosynthesis, a post-translational modification of histidine which occurs in elongation factor 2. Dph1 and dph2 transfer a 3-amino-3-carboxypropyl (ACP) group from S-adenosyl-L-methionine (SAM) to a histidine residue, the reaction is assisted by a reduction system comprising dph3 and a NADH-dependent reductase, predominantly cbr1. The sequence is that of 2-(3-amino-3-carboxypropyl)histidine synthase subunit 1 (dph1) from Schizosaccharomyces pombe (strain 972 / ATCC 24843) (Fission yeast).